An 864-amino-acid polypeptide reads, in one-letter code: Leucine--tRNA ligase (864 aa).

The 'HIGH' region motif lies at 47–57; sequence PYPSGNLHMGH. Positions 298 to 317 are disordered; the sequence is SEQDRVADDRPKRGVATGGT. Residues 299–309 are compositionally biased toward basic and acidic residues; that stretch reads EQDRVADDRPK. The short motif at 622-626 is the 'KMSKS' region element; the sequence is KMSKS. Lys-625 contacts ATP.

This sequence belongs to the class-I aminoacyl-tRNA synthetase family.

The protein resides in the cytoplasm. The catalysed reaction is tRNA(Leu) + L-leucine + ATP = L-leucyl-tRNA(Leu) + AMP + diphosphate. The protein is Leucine--tRNA ligase of Synechococcus sp. (strain RCC307).